Here is a 178-residue protein sequence, read N- to C-terminus: tRNA (cytidine(56)-2'-O)-methyltransferase (178 aa).

Leu-88 is an S-adenosyl-L-methionine binding site.

The protein belongs to the aTrm56 family. Homodimer.

It is found in the cytoplasm. The catalysed reaction is cytidine(56) in tRNA + S-adenosyl-L-methionine = 2'-O-methylcytidine(56) in tRNA + S-adenosyl-L-homocysteine + H(+). Functionally, specifically catalyzes the AdoMet-dependent 2'-O-ribose methylation of cytidine at position 56 in tRNAs. The polypeptide is tRNA (cytidine(56)-2'-O)-methyltransferase (Methanopyrus kandleri (strain AV19 / DSM 6324 / JCM 9639 / NBRC 100938)).